Consider the following 481-residue polypeptide: Phosphoglucosamine mutase (481 aa).

Ser-129 serves as the catalytic Phosphoserine intermediate. The Mg(2+) site is built by Ser-129, Asp-271, Asp-273, and Asp-275. Position 129 is a phosphoserine (Ser-129).

This sequence belongs to the phosphohexose mutase family. The cofactor is Mg(2+). In terms of processing, activated by phosphorylation.

The enzyme catalyses alpha-D-glucosamine 1-phosphate = D-glucosamine 6-phosphate. In terms of biological role, catalyzes the conversion of glucosamine-6-phosphate to glucosamine-1-phosphate. This chain is Phosphoglucosamine mutase, found in Picosynechococcus sp. (strain ATCC 27264 / PCC 7002 / PR-6) (Agmenellum quadruplicatum).